The following is a 1070-amino-acid chain: Carbamoyl phosphate synthase large chain (1070 aa).

Positions 1–401 are carboxyphosphate synthetic domain; it reads MPKRDDIKTI…ALLKAVRSLE (401 aa). The ATP site is built by arginine 129, arginine 169, glycine 175, glycine 176, lysine 208, isoleucine 210, glutamate 215, glycine 241, isoleucine 242, histidine 243, glutamine 284, and glutamate 298. The ATP-grasp 1 domain occupies 133–327; that stretch reads RDLMNELGEP…IAKLAAKIAV (195 aa). Mg(2+) contacts are provided by glutamine 284, glutamate 298, and asparagine 300. Residues glutamine 284, glutamate 298, and asparagine 300 each contribute to the Mn(2+) site. Positions 402-546 are oligomerization domain; that stretch reads IGADHLLLEE…YSTYEEENES (145 aa). The interval 547–929 is carbamoyl phosphate synthetic domain; the sequence is TRSAKESVIV…ALYKGFVASG (383 aa). Residues 671–861 enclose the ATP-grasp 2 domain; it reads EKALEILQIP…MANVATRVIL (191 aa). Positions 707, 746, 748, 752, 777, 778, 779, 780, 820, and 832 each coordinate ATP. 3 residues coordinate Mg(2+): glutamine 820, glutamate 832, and asparagine 834. Residues glutamine 820, glutamate 832, and asparagine 834 each coordinate Mn(2+). The 141-residue stretch at 930–1070 folds into the MGS-like domain; that stretch reads TTMHDYGTVL…SEVKQPKARV (141 aa). The interval 930–1070 is allosteric domain; sequence TTMHDYGTVL…SEVKQPKARV (141 aa).

This sequence belongs to the CarB family. In terms of assembly, composed of two chains; the small (or glutamine) chain promotes the hydrolysis of glutamine to ammonia, which is used by the large (or ammonia) chain to synthesize carbamoyl phosphate. Tetramer of heterodimers (alpha,beta)4. It depends on Mg(2+) as a cofactor. Mn(2+) is required as a cofactor.

The enzyme catalyses hydrogencarbonate + L-glutamine + 2 ATP + H2O = carbamoyl phosphate + L-glutamate + 2 ADP + phosphate + 2 H(+). The catalysed reaction is hydrogencarbonate + NH4(+) + 2 ATP = carbamoyl phosphate + 2 ADP + phosphate + 2 H(+). It participates in amino-acid biosynthesis; L-arginine biosynthesis; carbamoyl phosphate from bicarbonate: step 1/1. The protein operates within pyrimidine metabolism; UMP biosynthesis via de novo pathway; (S)-dihydroorotate from bicarbonate: step 1/3. Functionally, large subunit of the glutamine-dependent carbamoyl phosphate synthetase (CPSase). CPSase catalyzes the formation of carbamoyl phosphate from the ammonia moiety of glutamine, carbonate, and phosphate donated by ATP, constituting the first step of 2 biosynthetic pathways, one leading to arginine and/or urea and the other to pyrimidine nucleotides. The large subunit (synthetase) binds the substrates ammonia (free or transferred from glutamine from the small subunit), hydrogencarbonate and ATP and carries out an ATP-coupled ligase reaction, activating hydrogencarbonate by forming carboxy phosphate which reacts with ammonia to form carbamoyl phosphate. The protein is Carbamoyl phosphate synthase large chain of Listeria monocytogenes serotype 4a (strain HCC23).